Here is a 233-residue protein sequence, read N- to C-terminus: Zinc import ATP-binding protein ZnuC (233 aa).

The region spanning 6–222 (IEFRNVSKKF…SEFSNALSSL (217 aa)) is the ABC transporter domain. 38 to 45 (GPNGAGKT) contacts ATP.

This sequence belongs to the ABC transporter superfamily. Zinc importer (TC 3.A.1.15.5) family. The complex is composed of two ATP-binding proteins (ZnuC), two transmembrane proteins (ZnuB) and a solute-binding protein (ZnuA).

Its subcellular location is the cell inner membrane. The enzyme catalyses Zn(2+)(out) + ATP(in) + H2O(in) = Zn(2+)(in) + ADP(in) + phosphate(in) + H(+)(in). In terms of biological role, part of the ABC transporter complex ZnuABC involved in zinc import. Responsible for energy coupling to the transport system. The sequence is that of Zinc import ATP-binding protein ZnuC from Rickettsia prowazekii (strain Madrid E).